Reading from the N-terminus, the 321-residue chain is Ornithine carbamoyltransferase (321 aa).

Carbamoyl phosphate contacts are provided by residues 53–56, Gln80, Arg104, and 131–134; these read STRT and HPCQ. L-ornithine-binding positions include Asn166, Asp230, and 234 to 235; that span reads SM. Residues 270–271 and Arg298 each bind carbamoyl phosphate; that span reads CL.

The protein belongs to the aspartate/ornithine carbamoyltransferase superfamily. OTCase family.

The protein resides in the cytoplasm. The enzyme catalyses carbamoyl phosphate + L-ornithine = L-citrulline + phosphate + H(+). Its pathway is amino-acid biosynthesis; L-arginine biosynthesis; L-arginine from L-ornithine and carbamoyl phosphate: step 1/3. Functionally, reversibly catalyzes the transfer of the carbamoyl group from carbamoyl phosphate (CP) to the N(epsilon) atom of ornithine (ORN) to produce L-citrulline. The sequence is that of Ornithine carbamoyltransferase from Bifidobacterium longum (strain NCC 2705).